Consider the following 54-residue polypeptide: Zinc-containing ferredoxin A (54 aa).

The segment at 1-21 is disordered; that stretch reads GIDPNYRTSRPEVGTHEGHKV. The interval 1–36 is N-terminal extension; sequence GIDPNYRTSRPEVGTHEGHKVYGPVENPKVLGIHGA. Residues 9 to 20 are compositionally biased toward basic and acidic residues; it reads SRPEVGTHEGHK. Residues histidine 16 and histidine 19 each contribute to the Zn(2+) site. Lysine 29 bears the N6-methyllysine mark. A Zn(2+)-binding site is contributed by histidine 34. One can recognise a 4Fe-4S ferredoxin-type 1 domain in the interval 35–54; it reads GAIVGVDFDLCIADGSCINA. [3Fe-4S] cluster contacts are provided by cysteine 45 and cysteine 51.

Requires [3Fe-4S] cluster as cofactor. [4Fe-4S] cluster serves as cofactor. It depends on Zn(2+) as a cofactor.

Functionally, ferredoxins are iron-sulfur proteins that transfer electrons in a wide variety of metabolic reactions. This chain is Zinc-containing ferredoxin A (zfx), found in Sulfuracidifex metallicus (Sulfolobus metallicus).